A 1338-amino-acid polypeptide reads, in one-letter code: Thioester-containing protein 1 allele S3 (1338 aa).

The N-terminal stretch at 1 to 21 is a signal peptide; it reads MWQFIRSRILTVIIFIGAAHG. Residues Asn68, Asn199, Asn242, Asn312, and Asn481 are each glycosylated (N-linked (GlcNAc...) asparagine). The segment at 580–609 is may contain the cleavage site; sequence ENEFDIFHSLGLFARTLDDILFDSANEKTG. 4 N-linked (GlcNAc...) asparagine glycosylation sites follow: Asn637, Asn728, Asn813, and Asn828. Positions 859–862 form a cross-link, isoglutamyl cysteine thioester (Cys-Gln); the sequence is CGEQ. Disulfide bonds link Cys1217-Cys1283, Cys1326-Cys1338, and Cys1329-Cys1334.

In terms of assembly, heterodimer of a TEP1-N chain and an TEP1-C chain non-covalently linked. Forms a complex composed of TEP1-N and TEP1-C heterodimer, LRIM1 and APL1C; the interaction stabilizes TEP1-N and TEP1-C heterodimer, prevents its binding to tissues while circulating in the hemolymph and protects the thioester bond from hydrolysis. Mature TEP1 and to a lesser extent full-length TEP1 interact with SPCLIP1; the interaction is induced by microbial infection. In the hemolymph, the full-length protein is cleaved by an unknow protease into a 75kDa N-terminal (TEP1-N) chain and an 80kDa C-terminal (TEP1-C) chain which remain non-covalently linked. The TEP1-C chain contains the thioester bond which covalently binds to the pathogen surface. Cleavage is induced by bacterial infection or aseptic wound injury. During embryonic and pupal development, the cleaved form is the predominant form. Post-translationally, N-glycosylated.

It is found in the secreted. Plays an essential role in the innate immune response against bacteria, fungi and protozoa infection. After proteolytic cleavage, the protein C-terminus binds covalently through a thioester bond to the pathogen surface resulting in pathogen clearance either by melanization or lysis. Initiate the recruitment and activation of a cascade of proteases, mostly of CLIP-domain serine proteases, which leads to the proteolytic cleavage of the prophenoloxidase (PPO) into active phenoloxidase (PO), the rate-limiting enzyme in melanin biosynthesis. In response to parasite P.berghei-mediated infection, binds to and mediates killing of ookinetes, as they egress from midgut epithelial cells into the basal labyrinth, by both lysis and melanization. During bacterial infection, binds to both Gram-positive and Gram-negative bacteria but only promotes phagocytosis of Gram-negative bacteria. Promotes the accumulation of SPCLIP1 onto the surface of P.berghei ookinetes and bacterium E.coli which leads to the melanization of the pathogen. Recruits CLIPA2 to bacteria surface. In response to bacterial infection, required for periostial hemocyte aggregation, but not for the aggregation of sessile hemocytes in non-periostial regions. During the late stage of fungus B.bassiana-mediated infection, required for the initiation of hyphae melanization by binding to the surface of hyphae and recruiting prophenoloxidase PPO to them. Plays a role in male fertility by binding to defective sperm cells and promoting their removal during spermatogenesis. In terms of biological role, binds to and mediates killing of parasite P.bergei ookinetes by lysis. Functionally, binds covalently through a thioester bond to the pathogen surface resulting in pathogen clearance. This is Thioester-containing protein 1 allele S3 from Anopheles gambiae (African malaria mosquito).